The chain runs to 332 residues: T-cell surface glycoprotein CD1c1 (332 aa).

Residues 1–17 (MLFLHFLFLDVVLGGSI) form the signal peptide. Topologically, residues 18–300 (TENVVQENIS…IILYWGHGLS (283 aa)) are extracellular. Residues asparagine 25, asparagine 38, asparagine 75, and asparagine 146 are each glycosylated (N-linked (GlcNAc...) asparagine). 2 disulfide bridges follow: cysteine 120–cysteine 184 and cysteine 224–cysteine 279. The Ig-like domain maps to 205 to 292 (PEVWLSSSPN…HSSLRDQDII (88 aa)). The chain crosses the membrane as a helical span at residues 301–321 (VILITFAVIVPLVLLIVLMLL). Topologically, residues 322–332 (YKKRCTYQGIQ) are cytoplasmic.

Heterodimer with B2M (beta-2-microglobulin).

Its subcellular location is the cell membrane. The protein resides in the endosome membrane. Antigen-presenting protein that binds self and non-self lipid and glycolipid antigens and presents them to T-cell receptors on natural killer T-cells. This chain is T-cell surface glycoprotein CD1c1 (CD1C1), found in Cavia porcellus (Guinea pig).